We begin with the raw amino-acid sequence, 520 residues long: Keratin, type II cytoskeletal 78 (520 aa).

Residues 1-110 (MSLSPCRAQR…DPQFQVVRTQ (110 aa)) are head. Residues 111-146 (ETQEIRTLNNQFASFIDKVRFLEQQNKVLETKWHLL) form a coil 1A region. The 314-residue stretch at 111–424 (ETQEIRTLNN…RLLEGEECRM (314 aa)) folds into the IF rod domain. The tract at residues 147 to 165 (QQQGLSGSQQGLEPVFEAC) is linker 1. Positions 166 to 258 (LDQLRKQLEQ…LNEEELGQLQ (93 aa)) are coil 1B. The segment at 259 to 281 (TQASDTSVVLSMDNNRYLDFSSI) is linker 12. The interval 282 to 421 (ITEVRARYEE…TYRRLLEGEE (140 aa)) is coil 2. The tract at residues 422–520 (CRMSGECTSQ…ESSLKTSITY (99 aa)) is tail.

It belongs to the intermediate filament family. In terms of assembly, heterotetramer of two type I and two type II keratins. As to expression, in non-keratinising esophageal and vaginal epithelium, strongly expressed in the basal and parabasal/lower suprabasal cell layers with considerably decreased expression in the mid/upper suprabasal layers (at protein level). A similar gradient from basal to lower suprabasal layers is seen in the partially keratinised dorsal tongue epithelium, in the scalp and in the plantar epidermis (at protein level). Extension of expression into the suprabasal compartments is distinctly more pronounced in non-keratinising epithelia than in keratinising epithelia and epidermis (at protein level). In scalp sections, present in the interfollicular epidermis and infundibulum including the entire outer root sheath of the hair follicles and also in the sebocytes (at protein level). In sweat glands, expressed in peripheral and luminal cells of the lower duct and in peripheral cells of the middle/upper duct with no expression observed in luminal cells (at protein level). In embryos at the 14th week of pregnancy, detected in basal and parabasal layers but is absent from the uppermost epidermal layer (at protein level). Expressed in tongue epithelium.

The polypeptide is Keratin, type II cytoskeletal 78 (KRT78) (Homo sapiens (Human)).